The chain runs to 114 residues: MSNPFQNIGKNLLYISAAGIASIYVVKTIVKARRDAKFIPKARGNNGEVNEKNYYDNLAQVKPGFPIPKDGGDNIDCSEDHQLVRKSKYEGSGLSAVTRKRGDKLGFLDRRRNE.

Residues 13-30 traverse the membrane as a helical segment; sequence LYISAAGIASIYVVKTIV.

Its subcellular location is the mitochondrion outer membrane. This is an uncharacterized protein from Saccharomyces cerevisiae (strain ATCC 204508 / S288c) (Baker's yeast).